We begin with the raw amino-acid sequence, 262 residues long: Small ribosomal subunit protein uS2 (262 aa).

The tract at residues 225 to 262 (KQGEQLTEEAKPEDKEDEKGQAEEKEVKEENNSANKEE) is disordered. The segment covering 232 to 262 (EEAKPEDKEDEKGQAEEKEVKEENNSANKEE) has biased composition (basic and acidic residues).

It belongs to the universal ribosomal protein uS2 family.

The sequence is that of Small ribosomal subunit protein uS2 from Halothermothrix orenii (strain H 168 / OCM 544 / DSM 9562).